We begin with the raw amino-acid sequence, 372 residues long: Probable peptidoglycan glycosyltransferase FtsW (372 aa).

Over 1-12 (MQKKSTISWSYD) the chain is Cytoplasmic. The chain crosses the membrane as a helical span at residues 13–33 (AWIVICTLSLLALGLLMVASA). Residues 34–45 (SMVISDRQFGYP) are Periplasmic-facing. A helical transmembrane segment spans residues 46-66 (FHYFIRHLIYLSLGLTLAWVA). Residues 67–77 (SRVPIKVWKTY) are Cytoplasmic-facing. A helical membrane pass occupies residues 78-98 (SGYLFLVGFLLLILVLAPVIG). Residues 99-109 (KTVNGSRRWIQ) are Periplasmic-facing. The chain crosses the membrane as a helical span at residues 110–130 (LGFISLQVSEVVKFVTILYLA). The Cytoplasmic segment spans residues 131-142 (SFLQRYQSEVQK). A helical transmembrane segment spans residues 143–163 (ELKGFLKPMLLVGILSGLLLL). The Periplasmic segment spans residues 164–165 (EP). Residues 166–186 (DFGAAVVITMTCLALLFLAGV) traverse the membrane as a helical segment. Arg-187 is a topological domain (cytoplasmic). A helical membrane pass occupies residues 188–208 (LWPFCVLLVLVAGSLILLAIL). Residues 209-277 (SPYRLQRLTS…LFAVLAEELG (69 aa)) lie on the Periplasmic side of the membrane. The helical transmembrane segment at 278 to 298 (LIGEILLMGLFVLLIGRIILI) threads the bilayer. Topologically, residues 299-315 (GRRAENSNQLYSAYLAY) are cytoplasmic. Residues 316–336 (GIALWLGLQVIINIGVTAGVL) form a helical membrane-spanning segment. Residues 337-342 (PTKGLT) are Periplasmic-facing. The chain crosses the membrane as a helical span at residues 343-363 (LPFISYGGSSLLMNCLAIGVI). Residues 364–372 (LRIAYETEN) lie on the Cytoplasmic side of the membrane.

It belongs to the SEDS family. FtsW subfamily.

The protein resides in the cell inner membrane. The catalysed reaction is [GlcNAc-(1-&gt;4)-Mur2Ac(oyl-L-Ala-gamma-D-Glu-L-Lys-D-Ala-D-Ala)](n)-di-trans,octa-cis-undecaprenyl diphosphate + beta-D-GlcNAc-(1-&gt;4)-Mur2Ac(oyl-L-Ala-gamma-D-Glu-L-Lys-D-Ala-D-Ala)-di-trans,octa-cis-undecaprenyl diphosphate = [GlcNAc-(1-&gt;4)-Mur2Ac(oyl-L-Ala-gamma-D-Glu-L-Lys-D-Ala-D-Ala)](n+1)-di-trans,octa-cis-undecaprenyl diphosphate + di-trans,octa-cis-undecaprenyl diphosphate + H(+). It participates in cell wall biogenesis; peptidoglycan biosynthesis. Functionally, peptidoglycan polymerase that is essential for cell division. The sequence is that of Probable peptidoglycan glycosyltransferase FtsW from Coxiella burnetii (strain RSA 493 / Nine Mile phase I).